The following is a 335-amino-acid chain: DNA-directed RNA polymerase subunit alpha (335 aa).

The tract at residues 1 to 231 (MVREKITVST…DLLIPFLHTK (231 aa)) is alpha N-terminal domain (alpha-NTD). Positions 263–335 (KKMALKSIFI…FVIDLPKNKF (73 aa)) are alpha C-terminal domain (alpha-CTD).

Belongs to the RNA polymerase alpha chain family. In terms of assembly, in plastids the minimal PEP RNA polymerase catalytic core is composed of four subunits: alpha, beta, beta', and beta''. When a (nuclear-encoded) sigma factor is associated with the core the holoenzyme is formed, which can initiate transcription.

It is found in the plastid. The protein resides in the chloroplast. The enzyme catalyses RNA(n) + a ribonucleoside 5'-triphosphate = RNA(n+1) + diphosphate. Its function is as follows. DNA-dependent RNA polymerase catalyzes the transcription of DNA into RNA using the four ribonucleoside triphosphates as substrates. The sequence is that of DNA-directed RNA polymerase subunit alpha from Helianthus annuus (Common sunflower).